We begin with the raw amino-acid sequence, 1131 residues long: Major DNA-binding protein (1131 aa).

A Required for filament formation motif is present at residues 790–791 (FW). The segment at 1112 to 1131 (LKCEETEHENEEPSLKKARL) is required for nuclear localization.

The protein belongs to the herpesviridae major DNA-binding protein family. Homooligomers. Forms double-helical filaments necessary for the formation of replication compartments within the host nucleus. Interacts with the origin-binding protein. Interacts with the helicase primase complex; this interaction stimulates primer synthesis activity of the helicase-primase complex. Interacts with the DNA polymerase. Interacts with the alkaline exonuclease; this interaction increases its nuclease processivity.

The protein resides in the host nucleus. Its function is as follows. Single-stranded DNA-binding protein required for DNA replication. In terms of biological role, plays several crucial roles in viral infection. Participates in the opening of the viral DNA origin to initiate replication by interacting with the origin-binding protein. May disrupt loops, hairpins and other secondary structures present on ssDNA to reduce and eliminate pausing of viral DNA polymerase at specific sites during elongation. Promotes viral DNA recombination by performing strand-transfer, characterized by the ability to transfer a DNA strand from a linear duplex to a complementary single-stranded DNA circle. Can also catalyze the renaturation of complementary single strands. Additionally, reorganizes the host cell nucleus, leading to the formation of prereplicative sites and replication compartments. This process is driven by the protein which can form double-helical filaments in the absence of DNA. In Human herpesvirus 7 (strain JI) (HHV-7), this protein is Major DNA-binding protein.